The following is a 238-amino-acid chain: SPEG neighbor protein (238 aa).

The 27-residue stretch at 29–55 (QSAAIRIQASYRGHRSRKELREKGPPR) folds into the IQ domain. Ig-like domains lie at 54–143 (PRVL…ARIL) and 147–236 (PTKI…ARVD).

This is SPEG neighbor protein from Homo sapiens (Human).